The following is a 540-amino-acid chain: MAVIFSSSALGSHTHVDRHLVRQPIRDLENNVDMLDHLSRVLALSSQYHALGAAIALFACACAYALVAPRQPPKFPAPQLYDETGPIDLIALDKTIKEGFQNYKGKYFTLKEAHGETVILPTKFMEELKALPDNMLNLDDEIDERFLSEYSLFTTTSVGGRISTVVNSIKNELTKTLGNLMGDIHEEVVYSFQELIPPCDDWTELDIQSKLVHIVALVSGRIFVGLPMSRNQEYLDCIIEFTLNVFFAVPEIRAYPRLLRWTSRYLNTKVRAVHKSLATMRRLMAPIIDDTKQQLEMGTGPHNMCAWNIKNSNQKERDSLNIQAQMQLATSMAAIHTTSMTVTNAIFDLAARPEYLQPLRDEFQDLRAIEPLPYLDKTSMPKLRKLDSFLKESHRLSPISLLNMRRKIVQPITLHDGTVLQPGMHIAFPLHQISNDEDLWENPSQFDGFRFQKLRDLPGNESKYQFTATGTNNLDFGHGVHACPGRFFAANEIKMILVHLIDNFDFKFKGDIGRPDSLWTPGGYHPDPSVRVLLKRRLKA.

The helical transmembrane segment at 50–68 threads the bilayer; sequence ALGAAIALFACACAYALVA. Residue Asn460 is glycosylated (N-linked (GlcNAc...) asparagine). Cys483 is a binding site for heme.

The protein belongs to the cytochrome P450 family. Heme is required as a cofactor.

It is found in the membrane. The protein operates within sesquiterpene biosynthesis. Cytochrome P450 monooxygenase; part of the gene cluster that mediates the biosynthesis of PR-toxin, a bicyclic sesquiterpene belonging to the eremophilane class and acting as a mycotoxin. The first step of the pathway is catalyzed by the aristolochene synthase which performs the cyclization of trans,trans-farnesyl diphosphate (FPP) to the bicyclic sesquiterpene aristolochene. Following the formation of aristolochene, the non-oxygenated aristolochene is converted to the trioxygenated intermediate eremofortin B, via 7-epi-neopetasone. This conversion appears to involve three enzymes, a hydroxysterol oxidase-like enzyme, the quinone-oxidase prx3 that forms the quinone-type-structure in the bicyclic nucleus of aristolochene with the C8-oxo group and the C-3 hydroxyl group, and the P450 monooxygenase prx9 that introduces the epoxide at the double bond between carbons 1 and 2. No monoxy or dioxy-intermediates have been reported to be released to the broth, so these three early oxidative reactions may be coupled together. Eremofortin B is further oxidized by another P450 monooxygenase, that introduces a second epoxide between carbons 7 and 11 prior to acetylation to eremofortin A by the acetyltransferase prx11. The second epoxidation may be performed by a second P450 monooxygenase. After the acetylation step, eremofortin A is converted to eremofortin C and then to PR-toxin. First the conversion of eremofortin A to eremofortin C proceeds by oxidation of the side chain of the molecule at C-12 and is catalyzed by the short-chain oxidoreductase prx1. The cytochrome P450 monooxygenase prx8 also plays a role in this step. The primary alcohol formed at C-12 is finally oxidized by the short-chain alcohol dehydrogenase prx4 that forms PR-toxin. This is Cytochrome P450 monooxygenase prx8 from Penicillium rubens (strain ATCC 28089 / DSM 1075 / NRRL 1951 / Wisconsin 54-1255) (Penicillium chrysogenum).